A 402-amino-acid polypeptide reads, in one-letter code: Sensor protein kinase FleS (402 aa).

Residues 188–393 (SLAHQIRTPL…CATLILPLIP (206 aa)) form the Histidine kinase domain. Position 191 is a phosphohistidine; by autocatalysis (H191).

It catalyses the reaction ATP + protein L-histidine = ADP + protein N-phospho-L-histidine.. Functionally, member of the two-component regulatory system FleS/FleR that regulates the expression of multiple genes involved in flagellar synthesis, adhesion, swarming, motility and antibiotic resistance. May function as a membrane-associated protein kinase that phosphorylates FleR in response to environmental signals leading to activation of specific gene promoters. The chain is Sensor protein kinase FleS (fleS) from Pseudomonas aeruginosa (strain ATCC 15692 / DSM 22644 / CIP 104116 / JCM 14847 / LMG 12228 / 1C / PRS 101 / PAO1).